Consider the following 395-residue polypeptide: Enoyl-[acyl-carrier-protein] reductase [NADH] (395 aa).

NAD(+)-binding positions include 48-53 (GASTGY), 74-75 (FE), 111-112 (DA), and 139-140 (LA). Residue Tyr225 participates in substrate binding. The active-site Proton donor is the Tyr235. Residues Lys244 and 273–275 (LVT) contribute to the NAD(+) site.

This sequence belongs to the TER reductase family. As to quaternary structure, monomer.

The catalysed reaction is a 2,3-saturated acyl-[ACP] + NAD(+) = a (2E)-enoyl-[ACP] + NADH + H(+). Its pathway is lipid metabolism; fatty acid biosynthesis. Functionally, involved in the final reduction of the elongation cycle of fatty acid synthesis (FAS II). Catalyzes the reduction of a carbon-carbon double bond in an enoyl moiety that is covalently linked to an acyl carrier protein (ACP). The protein is Enoyl-[acyl-carrier-protein] reductase [NADH] of Saccharophagus degradans (strain 2-40 / ATCC 43961 / DSM 17024).